Here is a 150-residue protein sequence, read N- to C-terminus: L-alanine exporter AlaE (150 aa).

Transmembrane regions (helical) follow at residues Phe17–Met37, Leu48–Leu68, Leu86–Ala106, and Ile111–Tyr131.

The protein belongs to the AlaE exporter family.

The protein resides in the cell inner membrane. Exports L-alanine. In Vibrio cholerae serotype O1 (strain ATCC 39315 / El Tor Inaba N16961), this protein is L-alanine exporter AlaE.